A 318-amino-acid chain; its full sequence is MARPKVEAGVKLRGAEKVARIPVKIIPTVDLPKKPDWIRVRIPVSPEVDRIKQLLRKHKLHSVCEEASCPNLGECFSGGTATFMIMGDICTRRCPFCDVGHGRPKALDADEPKSLAIAIADLRLKYVVITSVDRDDLRDGGAQHFADCIREIRLLSPGIQLETLVPDYRGRMDVALEITAAEPPDVFNHNLETVPRLYKAARPGSDYQWSLTLLQRFKQMVPHVPTKSGLMLGLGETDEEVIEVMKRMREHDIDMLTLGQYLQPSRNHLAVQRFVHPDTFAWFAEEGYKMGFKNVASGPLVRSSYHADEQAKIAKAML.

Residues Cys64, Cys69, Cys75, Cys90, Cys94, Cys97, and Ser304 each coordinate [4Fe-4S] cluster. The Radical SAM core domain maps to 76–293 (FSGGTATFMI…AEEGYKMGFK (218 aa)).

Belongs to the radical SAM superfamily. Lipoyl synthase family. Requires [4Fe-4S] cluster as cofactor.

It is found in the cytoplasm. It carries out the reaction [[Fe-S] cluster scaffold protein carrying a second [4Fe-4S](2+) cluster] + N(6)-octanoyl-L-lysyl-[protein] + 2 oxidized [2Fe-2S]-[ferredoxin] + 2 S-adenosyl-L-methionine + 4 H(+) = [[Fe-S] cluster scaffold protein] + N(6)-[(R)-dihydrolipoyl]-L-lysyl-[protein] + 4 Fe(3+) + 2 hydrogen sulfide + 2 5'-deoxyadenosine + 2 L-methionine + 2 reduced [2Fe-2S]-[ferredoxin]. It functions in the pathway protein modification; protein lipoylation via endogenous pathway; protein N(6)-(lipoyl)lysine from octanoyl-[acyl-carrier-protein]: step 2/2. In terms of biological role, catalyzes the radical-mediated insertion of two sulfur atoms into the C-6 and C-8 positions of the octanoyl moiety bound to the lipoyl domains of lipoate-dependent enzymes, thereby converting the octanoylated domains into lipoylated derivatives. The chain is Lipoyl synthase from Pseudomonas syringae pv. tomato (strain ATCC BAA-871 / DC3000).